A 131-amino-acid chain; its full sequence is Profilin-1 (131 aa).

This sequence belongs to the profilin family. Occurs in many kinds of cells as a complex with monomeric actin in a 1:1 ratio.

It localises to the cytoplasm. The protein resides in the cytoskeleton. In terms of biological role, binds to actin and affects the structure of the cytoskeleton. At high concentrations, profilin prevents the polymerization of actin, whereas it enhances it at low concentrations. By binding to PIP2, it inhibits the formation of IP3 and DG. The sequence is that of Profilin-1 from Hevea brasiliensis (Para rubber tree).